The primary structure comprises 478 residues: Argininosuccinate synthase (478 aa).

ATP is bound by residues 17-25 (AFSGGLDTS) and Ala-43. Tyr-99 provides a ligand contact to L-citrulline. Gly-129 and Thr-131 together coordinate ATP. Thr-131, Asn-135, and Asp-136 together coordinate L-aspartate. Asn-135 is a binding site for L-citrulline. Position 136 (Asp-136) interacts with ATP. L-citrulline is bound by residues Arg-139 and Ser-192. Asp-194 is an ATP binding site. 3 residues coordinate L-citrulline: Thr-201, Glu-203, and Glu-280.

It belongs to the argininosuccinate synthase family. Type 2 subfamily. In terms of assembly, homotetramer.

The protein resides in the cytoplasm. It carries out the reaction L-citrulline + L-aspartate + ATP = 2-(N(omega)-L-arginino)succinate + AMP + diphosphate + H(+). It functions in the pathway amino-acid biosynthesis; L-arginine biosynthesis; L-arginine from L-ornithine and carbamoyl phosphate: step 2/3. This chain is Argininosuccinate synthase, found in Leifsonia xyli subsp. xyli (strain CTCB07).